The sequence spans 391 residues: Terminal nucleotidyltransferase 5C (391 aa).

It belongs to the TENT family. As to quaternary structure, interacts with BCCIP and PABPC1; the interaction has no effect on TENT5C poly(A) polymerase function. Interacts with PLK4; this interaction leads to the TENT5C recruitment into the centrosome.

It localises to the nucleus. The protein resides in the cytoplasm. The protein localises to the cytoskeleton. It is found in the microtubule organizing center. Its subcellular location is the centrosome. The enzyme catalyses RNA(n) + ATP = RNA(n)-3'-adenine ribonucleotide + diphosphate. In terms of biological role, catalyzes the transfer of one adenosine molecule from an ATP to an mRNA poly(A) tail bearing a 3'-OH terminal group and enhances mRNA stability and gene expression. Can also elongate RNA oligos ending with uridine molecule, provided that the sequence is adenosine-rich. Mainly targets mRNAs encoding endoplasmic reticulum-targeted protein. The protein is Terminal nucleotidyltransferase 5C of Rattus norvegicus (Rat).